The primary structure comprises 24 residues: Humanin-like 6 (24 aa).

The protein belongs to the humanin family. In terms of tissue distribution, expressed in skeletal muscle and testis.

The protein resides in the secreted. The protein localises to the cytoplasm. Plays a role as a neuroprotective and antiapoptotic factor. This chain is Humanin-like 6, found in Homo sapiens (Human).